The following is a 413-amino-acid chain: Peptidase T (413 aa).

His-81 contacts Zn(2+). Asp-83 is a catalytic residue. Asp-143 is a Zn(2+) binding site. Glu-178 acts as the Proton acceptor in catalysis. Residues Glu-179, Asp-201, and His-383 each contribute to the Zn(2+) site.

Belongs to the peptidase M20B family. In terms of assembly, homodimer. Zn(2+) is required as a cofactor.

It is found in the cytoplasm. The catalysed reaction is Release of the N-terminal residue from a tripeptide.. With respect to regulation, inhibited by EDTA, by the reducing agents dithiothreitol and 13-mercaptoethanol, and by the divalent cation Cu(2+). Functionally, cleaves the N-terminal amino acid of tripeptides. Has a broad specificity for tripeptides with no clear preference for a particular tripeptide. Tripeptides with proline in the second position are an exception and are not hydrolyzed. Does not hydrolyze dipeptides, tetrapeptides, or oligopeptides. The chain is Peptidase T (pepT) from Lactococcus lactis subsp. cremoris (Streptococcus cremoris).